Reading from the N-terminus, the 1860-residue chain is Golgi-specific brefeldin A-resistance guanine nucleotide exchange factor 1 (1860 aa).

Positions 1-211 (MVDKNIYIIQ…EPKNYVGTNM (211 aa)) are DCB; DCB:DCB domain and DCB:HUS domain interaction. The tract at residues 1-381 (MVDKNIYIIQ…SVHDMDYVNP (381 aa)) is interaction with RAB1B. 2 disordered regions span residues 215–266 (KMRA…GGMP) and 281–372 (AASA…DSAS). Over residues 227-241 (WKKQKRSPRPPRHMT) the composition is skewed to basic residues. Polar residues-rich tracts occupy residues 250–262 (PTPN…SNLT), 290–301 (TDSGLEFSSQTT), and 335–351 (DLQQ…SASV). Residues S350 and S353 each carry the phosphoserine modification. T508 is modified (phosphothreonine). The segment at 531–551 (RIPSFVTELYINYDCDYYCSN) is HUS; DCB:HUS domain interaction. Basic and acidic residues predominate over residues 620-631 (TREASNTERTAS). Residues 620 to 666 (TREASNTERTASDGKAVGMASDIPGLHLPGGGRLPPEHGKSGCSDLE) are disordered. A Phosphoserine modification is found at S663. Residues 693–883 (ELIEIKNKKK…EDMYHAIKNE (191 aa)) form the SEC7 domain. The interval 887–1371 (MPEEQTGLVR…PSRPGPSPLI (485 aa)) is phosphatidylinositol-phosphate binding; required for translocation to the leading edge and for ARF1 activation upon GPCR signaling. Residues 1285–1297 (QATARADAPDAGA) show a composition bias toward low complexity. Residues 1285-1336 (QATARADAPDAGAQSDSELPSYHQNDVSLDRGYTSDSEVYTDHGRPGKIHRS) are disordered. Polar residues predominate over residues 1298–1311 (QSDSELPSYHQNDV). S1299 bears the Phosphoserine mark. Y1317 is subject to Phosphotyrosine. Phosphoserine is present on residues S1319, S1321, and S1336. T1338 carries the post-translational modification Phosphothreonine; by AMPK. Disordered stretches follow at residues 1351–1371 (GKDD…SPLI), 1431–1484 (CKSQ…DEGV), and 1726–1809 (PMPM…QPPL). Residues 1433–1447 (SQEKRGKSHKYDSKG) show a composition bias toward basic and acidic residues. Residues 1465 to 1474 (TSSQHASRGG) are compositionally biased toward polar residues. Phosphoserine is present on residues S1476, S1774, and S1785. A compositionally biased stretch (low complexity) spans 1775 to 1792 (PRAASSSSPGSPVASSPS).

In terms of assembly, can form homodimers and probably homotetramers. Interacts with COPG1; the interaction is independent of ARF1 activation. Interacts with ARF1, ARF3, ARF4 and ARF5. Interacts with RAB1B (GTP-bound form); required for GBF1 membrane association. Interacts with GGA1, GGA2 and GGA3. Interacts with USO1. Interacts (via SEC7 domain) with PNPLA2 (via C-terminus); the interaction is direct. Interacts with ARMH3. (Microbial infection) Interacts with poliovirus protein 3A. Post-translationally, AMPK-mediated phosphorylation at Thr-1338 is induced by 2-deoxyglucose (2-DG) and AICA ribonucleotide, and occurs during mitosis leading to membrane disassociation and inactivation of ARF1 during mitosis. As to expression, ubiquitous.

Its subcellular location is the golgi apparatus. It is found in the cis-Golgi network. It localises to the endoplasmic reticulum-Golgi intermediate compartment. The protein localises to the trans-Golgi network. The protein resides in the cytoplasm. Its subcellular location is the lipid droplet. It is found in the membrane. With respect to regulation, inhibited by brefeldin A (BFA). Inhibited by golgicide A (GCA). Functionally, guanine-nucleotide exchange factor (GEF) for members of the Arf family of small GTPases involved in trafficking in the early secretory pathway; its GEF activity initiates the coating of nascent vesicles via the localized generation of activated ARFs through replacement of GDP with GTP. Recruitment to cis-Golgi membranes requires membrane association of Arf-GDP and can be regulated by ARF1, ARF3, ARF4 and ARF5. Involved in the recruitment of the COPI coat complex to the endoplasmic reticulum exit sites (ERES), and the endoplasmic reticulum-Golgi intermediate (ERGIC) and cis-Golgi compartments which implicates ARF1 activation. Involved in COPI vesicle-dependent retrograde transport from the ERGIC and cis-Golgi compartments to the endoplasmic reticulum (ER). Involved in the trans-Golgi network recruitment of GGA1, GGA2, GGA3, BIG1, BIG2, and the AP-1 adaptor protein complex related to chlathrin-dependent transport; the function requires its GEF activity (probably at least in part on ARF4 and ARF5). Has GEF activity towards ARF1. Has in vitro GEF activity towards ARF5. Involved in the processing of PSAP. Required for the assembly of the Golgi apparatus. The AMPK-phosphorylated form is involved in Golgi disassembly during mitotis and under stress conditions. May be involved in the COPI vesicle-dependent recruitment of PNPLA2 to lipid droplets; however, this function is under debate. In neutrophils, involved in G protein-coupled receptor (GPCR)-mediated chemotaxis und superoxide production. Proposed to be recruited by phosphatidylinositol-phosphates generated upon GPCR stimulation to the leading edge where it recruits and activates ARF1, and is involved in recruitment of GIT2 and the NADPH oxidase complex. Plays a role in maintaining mitochondrial morphology. The sequence is that of Golgi-specific brefeldin A-resistance guanine nucleotide exchange factor 1 (GBF1) from Homo sapiens (Human).